The chain runs to 467 residues: MLPGTSRLPTEASMSWVLLSVLWLIIQIQVIDATLTPELKPHEIVRPKKLPISQKRGLENNQTERYGKEEKYAPEVQYQIILNGEEIVFHLKRTKHLLGPDYTETSYSPRGEESTRHSQDVKPCYYEGHIQNARGSLARISTCDGLRGYFTHRDQRYQIKPLQSTDEGEHAVLPYSWKGQDTVHDKDAEKQVVRKRSHLRTSRSLKNPNEDLLQGQKYIGLFLVLDNAYYKLYNGNVTQMRTFLFKVLNLLNMIYKTINIQVSLVGMEIWSDQDKIKVEPNLGATFTHFMRWHYSNLGKRIHNHAQLLSGASFRHGRVGMAAGNSFCTTSSVSVIEAKKKNNVALVALMSHELGHALGMKDVPYYTKCPSGSCVMNQYLSSKFPKDFSTVSRSHFQGFLSSRNARCLLLAPDPKNIIKPTCGNQVLDVGEECDCGSPEECTNLCCEPLTCRLKSQPDCSEASNHITE.

Positions 1 to 33 (MLPGTSRLPTEASMSWVLLSVLWLIIQIQVIDA) are cleaved as a signal peptide. The propeptide occupies 34–208 (TLTPELKPHE…LRTSRSLKNP (175 aa)). N-linked (GlcNAc...) asparagine glycosylation is found at asparagine 61 and asparagine 236. The Peptidase M12B domain occupies 217–411 (KYIGLFLVLD…RNARCLLLAP (195 aa)). 2 disulfides stabilise this stretch: cysteine 327–cysteine 406 and cysteine 368–cysteine 373. Histidine 351 contributes to the Zn(2+) binding site. Residue glutamate 352 is part of the active site. Residues histidine 355 and aspartate 361 each contribute to the Zn(2+) site. Residues 418 to 467 (KPTCGNQVLDVGEECDCGSPEECTNLCCEPLTCRLKSQPDCSEASNHITE) form the Disintegrin domain.

Requires Zn(2+) as cofactor. As to expression, expressed highly in uterus during pregnancy.

It is found in the secreted. Its function is as follows. May play an important role in the control of the immune response and during pregnancy. The sequence is that of ADAM DEC1 (Adamdec1) from Mus musculus (Mouse).